The following is a 99-amino-acid chain: MASVNIKPLEDKILVQANEAETTTASGLVIPDTAKEKPQEGTVVAVGEGRVNEQGNRIPVDVKEGDTVIYSKYGGTEIKYAGQEYLILSARDVLAVVSK.

Belongs to the GroES chaperonin family. As to quaternary structure, heptamer of 7 subunits arranged in a ring. Interacts with the chaperonin GroEL.

The protein localises to the cytoplasm. Functionally, together with the chaperonin GroEL, plays an essential role in assisting protein folding. The GroEL-GroES system forms a nano-cage that allows encapsulation of the non-native substrate proteins and provides a physical environment optimized to promote and accelerate protein folding. GroES binds to the apical surface of the GroEL ring, thereby capping the opening of the GroEL channel. In Rhodococcus erythropolis (strain PR4 / NBRC 100887), this protein is Co-chaperonin GroES.